Consider the following 255-residue polypeptide: Adenosylcobinamide-GDP ribazoletransferase (255 aa).

The next 6 membrane-spanning stretches (helical) occupy residues 43–63 (LVGT…SLFF), 64–84 (PYQV…GAFH), 113–133 (IGTY…VFLT), 141–161 (FGLM…TLIY), 195–215 (LAAI…AILF), and 234–254 (CLGG…IAVV).

It belongs to the CobS family. The cofactor is Mg(2+).

It is found in the cell inner membrane. It carries out the reaction alpha-ribazole + adenosylcob(III)inamide-GDP = adenosylcob(III)alamin + GMP + H(+). It catalyses the reaction alpha-ribazole 5'-phosphate + adenosylcob(III)inamide-GDP = adenosylcob(III)alamin 5'-phosphate + GMP + H(+). It participates in cofactor biosynthesis; adenosylcobalamin biosynthesis; adenosylcobalamin from cob(II)yrinate a,c-diamide: step 7/7. Joins adenosylcobinamide-GDP and alpha-ribazole to generate adenosylcobalamin (Ado-cobalamin). Also synthesizes adenosylcobalamin 5'-phosphate from adenosylcobinamide-GDP and alpha-ribazole 5'-phosphate. In Vibrio vulnificus (strain CMCP6), this protein is Adenosylcobinamide-GDP ribazoletransferase.